The sequence spans 408 residues: Imidazolonepropionase (408 aa).

His73 and His75 together coordinate Fe(3+). Residues His73 and His75 each contribute to the Zn(2+) site. Residues Arg82, Tyr145, and His178 each contribute to the 4-imidazolone-5-propanoate site. Position 145 (Tyr145) interacts with N-formimidoyl-L-glutamate. His243 serves as a coordination point for Fe(3+). His243 provides a ligand contact to Zn(2+). 4-imidazolone-5-propanoate is bound at residue Gln246. Asp318 contacts Fe(3+). Asp318 serves as a coordination point for Zn(2+). Asn320 and Gly322 together coordinate N-formimidoyl-L-glutamate. Ser323 lines the 4-imidazolone-5-propanoate pocket.

This sequence belongs to the metallo-dependent hydrolases superfamily. HutI family. Zn(2+) serves as cofactor. Requires Fe(3+) as cofactor.

It localises to the cytoplasm. It carries out the reaction 4-imidazolone-5-propanoate + H2O = N-formimidoyl-L-glutamate. Its pathway is amino-acid degradation; L-histidine degradation into L-glutamate; N-formimidoyl-L-glutamate from L-histidine: step 3/3. In terms of biological role, catalyzes the hydrolytic cleavage of the carbon-nitrogen bond in imidazolone-5-propanoate to yield N-formimidoyl-L-glutamate. It is the third step in the universal histidine degradation pathway. This chain is Imidazolonepropionase, found in Shewanella baltica (strain OS195).